The chain runs to 76 residues: uncharacterized protein (76 aa).

The segment at 1–28 (MSTEKLEASEEPQAPLANTSETNSIKGD) is disordered. The span at 16-26 (LANTSETNSIK) shows a compositional bias: polar residues.

Its subcellular location is the cytoplasm. It localises to the bud. The protein localises to the bud neck. This is an uncharacterized protein from Saccharomyces cerevisiae (strain ATCC 204508 / S288c) (Baker's yeast).